Reading from the N-terminus, the 327-residue chain is Gamma-resorcylate decarboxylase (327 aa).

E8, H10, H164, and D287 together coordinate Zn(2+). The active site involves D287.

It belongs to the metallo-dependent hydrolases superfamily. ACMSD family. As to quaternary structure, homotetramer. Zn(2+) is required as a cofactor.

It catalyses the reaction 2,6-dihydroxybenzoate + H(+) = resorcinol + CO2. The enzyme catalyses 2,3-dihydroxybenzoate + H(+) = catechol + CO2. Its pathway is aromatic compound metabolism. With respect to regulation, insensitive to oxygen. Decarboxylation and carboxylation are inhibited by AgNO(3) and by diethyl pyrocarbonate, a histidine residue-specific inhibitor. Decarboxylation is also inhibited by HgCl(2) and activated by MgCl(2). Functionally, involved in the gamma-resorcylate (2,6-dihydroxybenzoate) catabolism. Catalyzes the reversible decarboxylation of gamma-resorcylate to resorcinol. Also catalyzes the decarboxylation of 2,3-dihydroxybenzoate to catechol, but does not act on 2-hydroxybenzoic acid 3-hydroxybenzoic acid, 4-hydroxybenzoic acid, 3,4-dihydroxybenzoic acid, 2,5-dihydroxybenzoic acid, 2,3,4-trihydroxybenzoic acid, 3,4,5-trihydroxybenzoic acid, 4-aminobenzoic acid, o-hydroxyphenylacetic acid and vanillic acid. Resorcinol and catechol can both be carboxylated by the reverse reaction. The polypeptide is Gamma-resorcylate decarboxylase (Rhizobium radiobacter (Agrobacterium tumefaciens)).